The sequence spans 1435 residues: Neuropathy target esterase sws (1435 aa).

Over 1–35 (MDVLELLRVSGSNMYYSTFLADAWCYYISNQITMT) the chain is Lumenal. The helical transmembrane segment at 36-56 (MYLYCALGVLSMLFIGWFVYF) threads the bilayer. Topologically, residues 57 to 1435 (KRLARLRLRH…NTNNETKNYL (1379 aa)) are cytoplasmic. Residue 176–303 (IFGHFEKPIF…IRVIQVIMIR (128 aa)) participates in a nucleoside 3',5'-cyclic phosphate binding. Residues 361–372 (AASGTAGSTHTA) are compositionally biased toward low complexity. 2 disordered regions span residues 361-405 (AASG…ELSG) and 422-452 (NSYP…QPEV). A compositionally biased stretch (polar residues) spans 435–449 (GNLSTRRGSITQQEQ). Phosphoserine is present on Ser443. A nucleoside 3',5'-cyclic phosphate is bound by residues 474 to 601 (ELGL…VVRR) and 590 to 717 (IVLD…LSHR). Residues 944–1110 (LVLGGGGARG…VNNLPGHLWR (167 aa)) form the PNPLA domain. Positions 948–953 (GGGARG) match the GXGXXG motif. A GXSXG motif is present at residues 975–979 (GVSIG). The active-site Nucleophile is the Ser977. Asp1097 acts as the Proton acceptor in catalysis. The DGA/G signature appears at 1097–1099 (DGG). Residues 1308 to 1435 (MDKATQSTPP…NTNNETKNYL (128 aa)) form a disordered region. Residues 1311–1322 (ATQSTPPLQSKA) are compositionally biased toward polar residues. 2 stretches are compositionally biased toward basic and acidic residues: residues 1330–1361 (SKEE…RELS) and 1393–1424 (MDKK…KENR). Over residues 1425-1435 (SNTNNETKNYL) the composition is skewed to polar residues.

Belongs to the NTE family. In terms of assembly, interacts with Pka-C3; interaction inhibits the catalytic function of Pka-C3 and the esterase activity of sws.

The protein localises to the endoplasmic reticulum membrane. It catalyses the reaction a 1-acyl-sn-glycero-3-phosphocholine + H2O = sn-glycerol 3-phosphocholine + a fatty acid + H(+). Phospholipase B that deacylates intracellular phosphatidylcholine (PtdCho), generating glycerophosphocholine (GroPtdCho). This deacylation occurs at both sn-2 and sn-1 positions of PtdCho. Its specific chemical modification by certain organophosphorus (OP) compounds leads to distal axonopathy. Plays a role in the signaling mechanism between neurons and glia that regulates glia wrapping during development of the adult brain. Essential for membrane lipid homeostasis and cell survival in both neurons and glia of the adult brain. This chain is Neuropathy target esterase sws, found in Drosophila persimilis (Fruit fly).